A 364-amino-acid polypeptide reads, in one-letter code: NADH-quinone oxidoreductase subunit H (364 aa).

Helical transmembrane passes span 15–35, 84–104, 123–143, 169–189, 206–226, 257–277, 302–322, and 341–361; these read LLVLGQIGLFTLVLLLSIAFL, AVFILAPILTCTLAFVTWAAI, VGVLYLFAISSLGVYGIIMGG, IGFVIVTVILLVGSMNLTTIV, YFPLIVVMVPMFVIFFISALA, LFMLGEYLNIVLMCAMMTILF, LSGLAWFMGKVLFCFFLFALV, and IFLPTSLAAVIIVAGYVTFVG.

Belongs to the complex I subunit 1 family. NDH-1 is composed of 14 different subunits. Subunits NuoA, H, J, K, L, M, N constitute the membrane sector of the complex.

The protein resides in the cell inner membrane. It catalyses the reaction a quinone + NADH + 5 H(+)(in) = a quinol + NAD(+) + 4 H(+)(out). Functionally, NDH-1 shuttles electrons from NADH, via FMN and iron-sulfur (Fe-S) centers, to quinones in the respiratory chain. The immediate electron acceptor for the enzyme in this species is believed to be ubiquinone. Couples the redox reaction to proton translocation (for every two electrons transferred, four hydrogen ions are translocated across the cytoplasmic membrane), and thus conserves the redox energy in a proton gradient. This subunit may bind ubiquinone. The chain is NADH-quinone oxidoreductase subunit H from Hyphomonas neptunium (strain ATCC 15444).